Reading from the N-terminus, the 88-residue chain is Small ribosomal subunit protein uS15 (88 aa).

This sequence belongs to the universal ribosomal protein uS15 family. In terms of assembly, part of the 30S ribosomal subunit. Forms a bridge to the 50S subunit in the 70S ribosome, contacting the 23S rRNA.

Functionally, one of the primary rRNA binding proteins, it binds directly to 16S rRNA where it helps nucleate assembly of the platform of the 30S subunit by binding and bridging several RNA helices of the 16S rRNA. Its function is as follows. Forms an intersubunit bridge (bridge B4) with the 23S rRNA of the 50S subunit in the ribosome. The chain is Small ribosomal subunit protein uS15 from Thermoanaerobacter pseudethanolicus (strain ATCC 33223 / 39E) (Clostridium thermohydrosulfuricum).